Consider the following 557-residue polypeptide: DNA 3'-5' helicase XPB (557 aa).

Positions 1-135 (MTDGPLIVQS…APLLGTRIAP (135 aa)) are required for protein stability or solubility. The region spanning 190–344 (VDNFWNGGSG…DVFSLIGPKR (155 aa)) is the Helicase ATP-binding domain. Residue 203–210 (LPCGAGKT) coordinates ATP. A DEAH box motif is present at residues 298–301 (DEVH). The Helicase C-terminal domain maps to 398 to 544 (RVVEKLVAQH…AYRIVDADDI (147 aa)).

The protein belongs to the helicase family. RAD25/XPB subfamily. In terms of assembly, monomer. Requires Mn(2+) as cofactor. Mg(2+) serves as cofactor. The cofactor is Ca(2+).

It carries out the reaction Couples ATP hydrolysis with the unwinding of duplex DNA by translocating in the 3'-5' direction.. It catalyses the reaction ATP + H2O = ADP + phosphate + H(+). ATP-dependent 3'-5' DNA helicase, unwinds 3'-overhangs, 3'- flaps, and splayed-arm DNA substrates but not 5'-overhangs or 5'-flap substrates. Requires ATP hydrolysis for activity; the ATPase activity is DNA-dependent and requires a minimum of 4 single-stranded nucleotides (nt) with 6-10 nt providing all necessary interactions for full processive unwinding. The ATPase prefers ATP over CTP or GTP, is almost inactive with TTP. The polypeptide is DNA 3'-5' helicase XPB (Kineococcus radiotolerans (strain ATCC BAA-149 / DSM 14245 / SRS30216)).